Consider the following 229-residue polypeptide: Aquaporin Z (229 aa).

2 helical membrane-spanning segments follow: residues Phe8–Phe28 and Ile33–Ile53. The short motif at Asn62–Ala64 is the NPA 1 element. A run of 3 helical transmembrane segments spans residues Val88 to Phe108, Leu129 to Gly149, and Gly158 to Val178. The short motif at Asn184–Ala186 is the NPA 2 element. A helical membrane pass occupies residues Ala192–Ile212.

The protein belongs to the MIP/aquaporin (TC 1.A.8) family. As to quaternary structure, homotetramer.

It localises to the cell inner membrane. The enzyme catalyses H2O(in) = H2O(out). Functionally, channel that permits osmotically driven movement of water in both directions. It is involved in the osmoregulation and in the maintenance of cell turgor during volume expansion in rapidly growing cells. It mediates rapid entry or exit of water in response to abrupt changes in osmolarity. This chain is Aquaporin Z, found in Chromobacterium violaceum (strain ATCC 12472 / DSM 30191 / JCM 1249 / CCUG 213 / NBRC 12614 / NCIMB 9131 / NCTC 9757 / MK).